We begin with the raw amino-acid sequence, 680 residues long: DNA-directed RNA polymerase subunit beta' (680 aa).

Zn(2+)-binding residues include Cys-69, Cys-71, Cys-87, and Cys-90. The Mg(2+) site is built by Asp-489, Asp-491, and Asp-493.

This sequence belongs to the RNA polymerase beta' chain family. RpoC1 subfamily. As to quaternary structure, in plastids the minimal PEP RNA polymerase catalytic core is composed of four subunits: alpha, beta, beta', and beta''. When a (nuclear-encoded) sigma factor is associated with the core the holoenzyme is formed, which can initiate transcription. Mg(2+) is required as a cofactor. Requires Zn(2+) as cofactor.

It localises to the plastid. The protein localises to the chloroplast. It carries out the reaction RNA(n) + a ribonucleoside 5'-triphosphate = RNA(n+1) + diphosphate. In terms of biological role, DNA-dependent RNA polymerase catalyzes the transcription of DNA into RNA using the four ribonucleoside triphosphates as substrates. This is DNA-directed RNA polymerase subunit beta' from Nandina domestica (Heavenly bamboo).